A 148-amino-acid polypeptide reads, in one-letter code: Putative cyclin-dependent kinase inhibitor SPL2 (148 aa).

Phosphoserine occurs at positions 59 and 86.

The protein localises to the cytoplasmic granule. It is found in the cytoplasm. Functionally, putative cyclin-dependent kinase (CDK) inhibitor necessary and sufficient for PHO pathway-dependent down-regulation of low-affinity phosphate transport. The polypeptide is Putative cyclin-dependent kinase inhibitor SPL2 (SPL2) (Saccharomyces cerevisiae (strain ATCC 204508 / S288c) (Baker's yeast)).